Consider the following 416-residue polypeptide: N-carbamoyl-L-amino-acid amidohydrolase (416 aa).

Positions 87, 98, 133, and 194 each coordinate a divalent metal cation. An N-carbamoyl-L-alpha-amino acid is bound by residues Gln197, His230, Asn279, Arg292, and Gly361. The tract at residues 213-331 (HCQGLWWLEF…SIEAVGHFDP (119 aa)) is involved in dimerization. Residue His386 coordinates a divalent metal cation.

The protein belongs to the peptidase M20 family. Homodimer. The cofactor is Mn(2+). Requires Ni(2+) as cofactor. Co(2+) is required as a cofactor. Fe(2+) serves as cofactor.

The enzyme catalyses an N-carbamoyl-L-alpha-amino acid + H2O + 2 H(+) = an L-alpha-amino acid + NH4(+) + CO2. The catalysed reaction is N-carbamoyl-L-methionine + H2O + 2 H(+) = L-methionine + NH4(+) + CO2. It carries out the reaction N-acetyl-L-methionine + H2O = L-methionine + acetate. It catalyses the reaction N(alpha)-formyl-L-methionine + H2O = formate + L-methionine. The enzyme catalyses N-carbamoyl-L-alanine + H2O + 2 H(+) = L-alanine + NH4(+) + CO2. The catalysed reaction is N-carbamoyl-L-cysteine + H2O + 2 H(+) = L-cysteine + NH4(+) + CO2. It carries out the reaction N-carbamoyl-L-tryptophan + H2O + 2 H(+) = L-tryptophan + NH4(+) + CO2. It catalyses the reaction N-carbamoyl-L-valine + H2O + 2 H(+) = L-valine + NH4(+) + CO2. The enzyme catalyses N-carbamoyl-L-phenylalanine + H2O + 2 H(+) = L-phenylalanine + NH4(+) + CO2. With respect to regulation, strongly inhibited by Hg(2+), Cu(2+), Zn(2+), Pb(2+) and Fe(3+) ions, and slightly inhibited by Na(+) and K(+) ions. Beta-mercaptoethanol and 5,5'-dithiobis-(2-nitrobenzoic acid)(DTNB) cause 34% and 42% inhibition, respectively. In terms of biological role, catalyzes the hydrolysis of both aliphatic and aromatic N-carbamoyl-L-alpha-amino acids to free L-alpha-amino acids. Is strictly L-specific since it is inactive toward N-carbamoyl-D-alpha-amino acids. Is also able to hydrolyze N-formyl-L-methionine and N-acetyl-L-methionine, but not ureidosuccinate or 3-ureidopropanoate. The chain is N-carbamoyl-L-amino-acid amidohydrolase from Rhizobium meliloti (Ensifer meliloti).